A 251-amino-acid polypeptide reads, in one-letter code: DNA repair protein RecO (251 aa).

This sequence belongs to the RecO family.

Its function is as follows. Involved in DNA repair and RecF pathway recombination. This is DNA repair protein RecO from Streptococcus mutans serotype c (strain ATCC 700610 / UA159).